Here is a 130-residue protein sequence, read N- to C-terminus: Cystatin domain-containing protein 1 (130 aa).

Positions 1-23 (MSWKVPMLVGLVVLGTHIWTINK) are cleaved as a signal peptide. Positions 37–116 (ASVEFAVAQF…CVFQVDARPW (80 aa)) constitute a Cystatin domain. Intrachain disulfides connect Cys-84–Cys-94 and Cys-107–Cys-127.

The protein belongs to the cystatin family.

The protein localises to the secreted. May play a specialized role in spermatogenesis. The polypeptide is Cystatin domain-containing protein 1 (Rattus norvegicus (Rat)).